The following is a 145-amino-acid chain: MDINEIREYLPHRYPFLLVDRVTELDVEAKRVRAYKNVTINEPFFNGHFPQHPIMPGVLIIEAMAQAAGLLGFKMMGVKPSDGTLYYFVGSDKLRFRQPVRPGDQLVLEADFLSNKRGIWKFDCRATVDGRPVCSAEIICAEQEI.

The active site involves His48.

It belongs to the thioester dehydratase family. FabZ subfamily.

The protein resides in the cytoplasm. The catalysed reaction is a (3R)-hydroxyacyl-[ACP] = a (2E)-enoyl-[ACP] + H2O. Its function is as follows. Involved in unsaturated fatty acids biosynthesis. Catalyzes the dehydration of short chain beta-hydroxyacyl-ACPs and long chain saturated and unsaturated beta-hydroxyacyl-ACPs. The sequence is that of 3-hydroxyacyl-[acyl-carrier-protein] dehydratase FabZ from Stutzerimonas stutzeri (strain A1501) (Pseudomonas stutzeri).